We begin with the raw amino-acid sequence, 524 residues long: N-acetylgalactosamine-6-sulfatase (524 aa).

The signal sequence occupies residues M1–G27. The tract at residues A28 to D381 is catalytic domain. Ca(2+)-binding residues include D40, D41, and C80. The Nucleophile role is filled by C80. Residue C80 is modified to 3-oxoalanine (Cys). H143 is an active-site residue. N205 carries an N-linked (GlcNAc...) asparagine glycan. Ca(2+) contacts are provided by D290 and N291. A disulfide bond links C310 and C421. N425 carries N-linked (GlcNAc...) asparagine glycosylation. Intrachain disulfides connect C491–C520 and C503–C509.

The protein belongs to the sulfatase family. In terms of assembly, homodimer. Ca(2+) serves as cofactor. Post-translationally, the conversion to 3-oxoalanine (also known as C-formylglycine, FGly), of a serine or cysteine residue in prokaryotes and of a cysteine residue in eukaryotes, is critical for catalytic activity.

It localises to the lysosome. It catalyses the reaction Hydrolysis of the 6-sulfate groups of the N-acetyl-D-galactosamine 6-sulfate units of chondroitin sulfate and of the D-galactose 6-sulfate units of keratan sulfate.. This Rattus norvegicus (Rat) protein is N-acetylgalactosamine-6-sulfatase (Galns).